Consider the following 587-residue polypeptide: Succinate dehydrogenase flavoprotein subunit (587 aa).

FAD-binding positions include 15–20 (GAGGAG), 39–54 (SKVF…AQGG), and aspartate 223. At histidine 47 the chain carries Tele-8alpha-FAD histidine. The substrate site is built by histidine 244 and threonine 256. Residue arginine 288 is the Proton acceptor of the active site. Histidine 355 is a substrate binding site. Glutamate 389 contributes to the FAD binding site. Residue arginine 400 coordinates substrate. 405–406 (SL) lines the FAD pocket.

This sequence belongs to the FAD-dependent oxidoreductase 2 family. FRD/SDH subfamily. Part of an enzyme complex containing four subunits: a flavoprotein, an iron-sulfur protein, cytochrome b-556 and a hydrophobic protein. FAD serves as cofactor.

It is found in the cell inner membrane. It catalyses the reaction a quinone + succinate = fumarate + a quinol. Its pathway is carbohydrate metabolism; tricarboxylic acid cycle; fumarate from succinate (bacterial route): step 1/1. The protein is Succinate dehydrogenase flavoprotein subunit (sdhA) of Coxiella burnetii (strain RSA 493 / Nine Mile phase I).